A 287-amino-acid polypeptide reads, in one-letter code: ATP synthase gamma chain (287 aa).

This sequence belongs to the ATPase gamma chain family. In terms of assembly, F-type ATPases have 2 components, CF(1) - the catalytic core - and CF(0) - the membrane proton channel. CF(1) has five subunits: alpha(3), beta(3), gamma(1), delta(1), epsilon(1). CF(0) has three main subunits: a, b and c.

The protein localises to the cell inner membrane. Its function is as follows. Produces ATP from ADP in the presence of a proton gradient across the membrane. The gamma chain is believed to be important in regulating ATPase activity and the flow of protons through the CF(0) complex. The polypeptide is ATP synthase gamma chain (Ruthia magnifica subsp. Calyptogena magnifica).